Reading from the N-terminus, the 187-residue chain is Ribosome-recycling factor (187 aa).

Belongs to the RRF family.

The protein resides in the cytoplasm. Responsible for the release of ribosomes from messenger RNA at the termination of protein biosynthesis. May increase the efficiency of translation by recycling ribosomes from one round of translation to another. The chain is Ribosome-recycling factor from Ruegeria sp. (strain TM1040) (Silicibacter sp.).